The following is a 430-amino-acid chain: MALLHSSRILSGMAAAFHPGLAAAASARASSWWTHVEMGPPDPILGVTEAFKRDTNSKKMNLGVGAYRDDNGKPYVLPSVRKAEAQIAAKNLDKEYLPIGGLAEFCKASAELALGENNEVLKSGRFVTVQTISGTGALRVGASFLQRFFKFSRDVFLPKPSWGNHTPIFRDAGMQLQGYRYYDPKTCGFDFSGALEDISKIPEQSVLLLHACAHNPTGVDPRPEQWKEIASVVKKKNLFAFFDMAYQGFASGDGDKDAWAVRHFIEQGINVCLCQSYAKNMGLYGERVGAFTVVCKDAEEAKRVESQLKILIRPLYSNPPLNGARIAATILTSPDLRKQWLQEVKGMADRIISMRTQLVSNLKKEGSSHNWQHITDQIGMFCFTGLKPEQVERLTKEFSVYMTKDGRISVAGVTSGNVGYLAHAIHQVTK.

The transit peptide at 1 to 29 directs the protein to the mitochondrion; sequence MALLHSSRILSGMAAAFHPGLAAAASARA. The residue at position 48 (threonine 48) is a Phosphothreonine. An N6-acetyllysine modification is found at lysine 59. Substrate is bound at residue glycine 65. Lysine 73 carries the post-translational modification N6-acetyllysine; alternate. Lysine 73 carries the N6-succinyllysine; alternate modification. Lysine 82 bears the N6-acetyllysine mark. Lysine 90 carries the N6-acetyllysine; alternate modification. Lysine 90 carries the post-translational modification N6-succinyllysine; alternate. Tyrosine 96 carries the 3'-nitrotyrosine; alternate modification. Tyrosine 96 is modified (phosphotyrosine; alternate). 2 positions are modified to N6-acetyllysine; alternate: lysine 107 and lysine 122. N6-succinyllysine; alternate occurs at positions 107 and 122. At serine 143 the chain carries Phosphoserine. Lysine 159 carries the N6-acetyllysine; alternate modification. Lysine 159 is modified (N6-succinyllysine; alternate). Tryptophan 162 contributes to the substrate binding site. The residue at position 185 (lysine 185) is an N6-acetyllysine; alternate. Lysine 185 carries the N6-succinyllysine; alternate modification. Residue asparagine 215 coordinates substrate. Residue lysine 227 is modified to N6-succinyllysine. Position 234 is an N6-acetyllysine (lysine 234). N6-acetyllysine; alternate occurs at positions 279 and 296. Lysine 279 carries the post-translational modification N6-(pyridoxal phosphate)lysine; alternate. Lysine 296 is modified (N6-succinyllysine; alternate). N6-acetyllysine is present on lysine 302. N6-acetyllysine; alternate is present on lysine 309. Lysine 309 is modified (N6-succinyllysine; alternate). Arginine 313 carries the asymmetric dimethylarginine modification. Lysine 338 is modified (N6-acetyllysine; alternate). Position 338 is an N6-succinyllysine; alternate (lysine 338). An N6-acetyllysine modification is found at lysine 345. Lysine 363 bears the N6-acetyllysine; alternate mark. Position 363 is an N6-succinyllysine; alternate (lysine 363). 2 positions are modified to N6-acetyllysine: lysine 364 and lysine 387. N6-acetyllysine; alternate is present on residues lysine 396 and lysine 404. 2 positions are modified to N6-succinyllysine; alternate: lysine 396 and lysine 404. Residue arginine 407 participates in substrate binding.

It belongs to the class-I pyridoxal-phosphate-dependent aminotransferase family. Homodimer. The cofactor is pyridoxal 5'-phosphate. In terms of processing, acetylation of Lys-296, Lys-345 and Lys-363 is observed in liver mitochondria from fasted mice but not from fed mice. Detected in brain (at protein level).

The protein localises to the mitochondrion matrix. It localises to the cell membrane. The enzyme catalyses L-aspartate + 2-oxoglutarate = oxaloacetate + L-glutamate. The catalysed reaction is L-kynurenine + 2-oxoglutarate = kynurenate + L-glutamate + H2O. Catalyzes the irreversible transamination of the L-tryptophan metabolite L-kynurenine to form kynurenic acid (KA). As a member of the malate-aspartate shuttle, it has a key role in the intracellular NAD(H) redox balance. Is important for metabolite exchange between mitochondria and cytosol, and for amino acid metabolism. Facilitates cellular uptake of long-chain free fatty acids. In Mus musculus (Mouse), this protein is Aspartate aminotransferase, mitochondrial (Got2).